We begin with the raw amino-acid sequence, 445 residues long: Phosphoglucosamine mutase (445 aa).

The active-site Phosphoserine intermediate is the Ser102. Ser102, Asp241, Asp243, and Asp245 together coordinate Mg(2+). Residue Ser102 is modified to Phosphoserine.

The protein belongs to the phosphohexose mutase family. Mg(2+) is required as a cofactor. In terms of processing, activated by phosphorylation.

The catalysed reaction is alpha-D-glucosamine 1-phosphate = D-glucosamine 6-phosphate. Functionally, catalyzes the conversion of glucosamine-6-phosphate to glucosamine-1-phosphate. The sequence is that of Phosphoglucosamine mutase from Escherichia coli (strain 55989 / EAEC).